The primary structure comprises 145 residues: Probable flagellum biosynthesis repressor protein FlbT (145 aa).

It belongs to the FlbT family.

In terms of biological role, has a post-transcriptional repressor function in flagellum biogenesis. Associates with the 5'-UTR of fljK mRNA and promotes its degradation. The sequence is that of Probable flagellum biosynthesis repressor protein FlbT from Chelativorans sp. (strain BNC1).